The following is a 467-amino-acid chain: Trigger factor (467 aa).

The region spanning 174–261 is the PPIase FKBP-type domain; that stretch reads SDIAILTFKG…LQDLKTRELP (88 aa). The interval 439–467 is disordered; sequence PKKALNEKVKSSKPKNTQKKTDKTKKDSP. Basic and acidic residues predominate over residues 457–467; the sequence is KKTDKTKKDSP.

It belongs to the FKBP-type PPIase family. Tig subfamily.

It localises to the cytoplasm. The enzyme catalyses [protein]-peptidylproline (omega=180) = [protein]-peptidylproline (omega=0). Functionally, involved in protein export. Acts as a chaperone by maintaining the newly synthesized protein in an open conformation. Functions as a peptidyl-prolyl cis-trans isomerase. The sequence is that of Trigger factor from Prochlorococcus marinus (strain SARG / CCMP1375 / SS120).